Here is a 225-residue protein sequence, read N- to C-terminus: Ribosomal RNA small subunit methyltransferase G (225 aa).

Residues glycine 69, 119–120 (AE), and arginine 136 contribute to the S-adenosyl-L-methionine site.

The protein belongs to the methyltransferase superfamily. RNA methyltransferase RsmG family.

The protein localises to the cytoplasm. In terms of biological role, specifically methylates the N7 position of a guanine in 16S rRNA. This is Ribosomal RNA small subunit methyltransferase G from Pseudothermotoga lettingae (strain ATCC BAA-301 / DSM 14385 / NBRC 107922 / TMO) (Thermotoga lettingae).